Here is a 153-residue protein sequence, read N- to C-terminus: MAVKIKLTRLGKIRNPQYRIVVADSRTRRNGRAIETIGKYHPKEEPSLIEVDSERAQYWLGVGAQPTEPVEAILKITGDWQKFKGLPGAEGTLRVKEAKPTKLELFQAALAQAENEPVGEAITPKKKKAKAEDAEAAADAPAEAAAESEAADK.

A disordered region spans residues 114–153 (ENEPVGEAITPKKKKAKAEDAEAAADAPAEAAAESEAADK). Low complexity predominate over residues 137-153 (AADAPAEAAAESEAADK).

It belongs to the bacterial ribosomal protein bS16 family.

The polypeptide is Small ribosomal subunit protein bS16 (Rhodococcus opacus (strain B4)).